The sequence spans 252 residues: MRILVTNDDGVHAPGLRVLEEIAAALSDDVYVVAPESDQSGVAHSLSLNDPLRLRRISERRYAVKGTPTDCVIMGVRRILDGREPDVVLSGVNSGQNVAEDVIYSGTVAGAMEGAILGIPAIALSQAYGRAGREKAFWSCAQAHAPGLIEKILATGVPANTVVNVNFPDCPPDAVEGVAVTAQGRRGYLVNVDARSDGRGNPYYWIAFDRPFSEPGKGTDVEALAHNRISVTPLRLDITDTPTLTRYAQALL.

A divalent metal cation-binding residues include D8, D9, S40, and N93.

This sequence belongs to the SurE nucleotidase family. The cofactor is a divalent metal cation.

Its subcellular location is the cytoplasm. The enzyme catalyses a ribonucleoside 5'-phosphate + H2O = a ribonucleoside + phosphate. In terms of biological role, nucleotidase that shows phosphatase activity on nucleoside 5'-monophosphates. This chain is 5'-nucleotidase SurE, found in Methylocella silvestris (strain DSM 15510 / CIP 108128 / LMG 27833 / NCIMB 13906 / BL2).